Here is a 708-residue protein sequence, read N- to C-terminus: Ribosomal RNA large subunit methyltransferase K/L (708 aa).

Residues 43–154 enclose the THUMP domain; the sequence is QGYQITLWTR…RGKITIGINF (112 aa).

The protein belongs to the methyltransferase superfamily. RlmKL family.

It is found in the cytoplasm. The catalysed reaction is guanosine(2445) in 23S rRNA + S-adenosyl-L-methionine = N(2)-methylguanosine(2445) in 23S rRNA + S-adenosyl-L-homocysteine + H(+). The enzyme catalyses guanosine(2069) in 23S rRNA + S-adenosyl-L-methionine = N(2)-methylguanosine(2069) in 23S rRNA + S-adenosyl-L-homocysteine + H(+). Specifically methylates the guanine in position 2445 (m2G2445) and the guanine in position 2069 (m7G2069) of 23S rRNA. The protein is Ribosomal RNA large subunit methyltransferase K/L of Shewanella amazonensis (strain ATCC BAA-1098 / SB2B).